A 416-amino-acid chain; its full sequence is Probable glucan 1,3-beta-glucosidase A (416 aa).

The first 22 residues, 1 to 22 (MIFKFSQKALVALYLVVGLAEA), serve as a signal peptide directing secretion. Glu-211 serves as the catalytic Proton donor. Cystine bridges form between Cys-291–Cys-415 and Cys-316–Cys-342. Residue Glu-308 is the Nucleophile of the active site. Residue Asn-344 is glycosylated (N-linked (GlcNAc...) asparagine).

The protein belongs to the glycosyl hydrolase 5 (cellulase A) family. In terms of assembly, monomer. The cofactor is Mn(2+).

It is found in the secreted. The enzyme catalyses Successive hydrolysis of beta-D-glucose units from the non-reducing ends of (1-&gt;3)-beta-D-glucans, releasing alpha-glucose.. In terms of biological role, beta-glucanases participate in the metabolism of beta-glucan, the main structural component of the cell wall. It could also function biosynthetically as a transglycosylase. The sequence is that of Probable glucan 1,3-beta-glucosidase A (exgA) from Aspergillus fumigatus (strain ATCC MYA-4609 / CBS 101355 / FGSC A1100 / Af293) (Neosartorya fumigata).